The primary structure comprises 510 residues: NAD(P)H-quinone oxidoreductase subunit 2 B, chloroplastic (510 aa).

Transmembrane regions (helical) follow at residues 26 to 46, 57 to 77, 99 to 119, 124 to 144, 149 to 169, 183 to 203, 227 to 247, 295 to 315, 323 to 342, 354 to 374, 395 to 415, 418 to 438, and 484 to 504; these read LFDGSFIFPEGILIFGLILLL, IPWFYFISSISLVMSITALLF, IFQFLILLCSTLCIPLSVEYI, MAITEFLLFVLTATLGGMFLC, LITIFVAPECFSLCSYLLSGY, YLLMGGASSSILVHGFSWLYG, PGISIALIFITVGIGFKLSPA, WHPLLEILAILSMILGNLIAI, MLAYSSIGQIGYVIIGIIVG, YMLFYISMNLGTFACIVLFGL, ALSLALCLLSLGGLPPLAGFF, LHLFWCGWQAGLYFLVSIGLF, and MIVCVIASTIPGISMNPIIAI.

The protein belongs to the complex I subunit 2 family. As to quaternary structure, NDH is composed of at least 16 different subunits, 5 of which are encoded in the nucleus.

It localises to the plastid. The protein resides in the chloroplast thylakoid membrane. The enzyme catalyses a plastoquinone + NADH + (n+1) H(+)(in) = a plastoquinol + NAD(+) + n H(+)(out). It carries out the reaction a plastoquinone + NADPH + (n+1) H(+)(in) = a plastoquinol + NADP(+) + n H(+)(out). In terms of biological role, NDH shuttles electrons from NAD(P)H:plastoquinone, via FMN and iron-sulfur (Fe-S) centers, to quinones in the photosynthetic chain and possibly in a chloroplast respiratory chain. The immediate electron acceptor for the enzyme in this species is believed to be plastoquinone. Couples the redox reaction to proton translocation, and thus conserves the redox energy in a proton gradient. This is NAD(P)H-quinone oxidoreductase subunit 2 B, chloroplastic from Oenothera argillicola (Appalachian evening primrose).